The primary structure comprises 537 residues: Cytochrome P450 monooxygenase ltmQ (537 aa).

The chain crosses the membrane as a helical span at residues 10–30 (FPKLNFATIVISGATIIGIIF). Asn-182, Asn-188, and Asn-310 each carry an N-linked (GlcNAc...) asparagine glycan. Cys-476 provides a ligand contact to heme.

Belongs to the cytochrome P450 family. Heme serves as cofactor.

The protein resides in the membrane. The protein operates within secondary metabolite biosynthesis. Functionally, cytochrome P450 monooxygenase; part of the gene clusters that mediates the biosynthesis of lolitrems, indole-diterpene mycotoxins that are potent tremorgens in mammals, and are synthesized by clavicipitaceous fungal endophytes in association with their grass hosts. The geranylgeranyl diphosphate (GGPP) synthase ltmG is proposed to catalyze the first step in lolitrem biosynthesis. LtmG catalyzes a series of iterative condensations of isopentenyl diphosphate (IPP) with dimethylallyl diphosphate (DMAPP), geranyl diphosphate (GPP), and farnesyl diphosphate (FPP), to form GGPP. GGPP then condenses with indole-3-glycerol phosphate to form 3-geranylgeranylindole, an acyclic intermediate, to be incorporated into paxilline. Either ltmG or ltmC could be responsible for this step, as both are putative prenyl transferases. The FAD-dependent monooxygenase ltmM then catalyzes the epoxidation of the two terminal alkenes of the geranylgeranyl moiety, which is subsequently cyclized by ltmB, to paspaline. The cytochrome P450 monooxygenases ltmQ and ltmP can sequentially oxidize paspaline to terpendole E and terpendole F. Alternatively, ltmP converts paspaline to an intermediate which is oxidized by ltmQ to terpendole F. LtmF, ltmK, ltmE and ltmJ appear to be unique to the epichloe endophytes. The prenyltransferase ltmF is involved in the 27-hydroxyl-O-prenylation. The cytochrome P450 monooxygenase ltmK is required for the oxidative acetal ring formation. The multi-functional prenyltransferase ltmE is required for C20- and C21-prenylations of the indole ring of paspalanes and acts together with the cytochrome P450 monooxygenase ltmJ to yield lolitremanes by multiple oxidations and ring closures. The stereoisomer pairs of lolitriol and lolitrem N or lolitrem B and lolitrem F may be attributed to variations in the way in which ring closure can occur under the action of ltmJ. While the major product of this pathway is lolitrem B, the prenyl transferases and cytochrome P450 monooxygenases identified in this pathway have a remarkable versatility in their regio- and stereo-specificities to generate a diverse range of metabolites that are products of a metabolic grid rather than a linear pathway. The sequence is that of Cytochrome P450 monooxygenase ltmQ from Epichloe festucae var. lolii (Neotyphodium lolii).